Reading from the N-terminus, the 490-residue chain is Protein twist (490 aa).

Disordered regions lie at residues Gln-48–Gln-74, Pro-98–Ser-167, and Leu-330–Glu-359. Positions Gln-54 to Gln-64 are enriched in basic residues. 2 stretches are compositionally biased toward low complexity: residues His-65–Gln-74 and Ser-104–Ser-135. Residues Ala-339 to Pro-351 are compositionally biased toward basic residues. The region spanning Asn-362–Leu-413 is the bHLH domain.

Efficient DNA binding requires dimerization with another bHLH protein. Homodimer.

The protein resides in the nucleus. In terms of biological role, involved in the establishment and dorsoventral patterning of germ layers in the embryo. The protein is Protein twist of Drosophila erecta (Fruit fly).